The sequence spans 456 residues: GPI-anchored protein 13 (456 aa).

The first 23 residues, 1–23 (MRSPSLAVAATTVLGLFSSSALA), serve as a signal peptide directing secretion. N27 carries an N-linked (GlcNAc...) asparagine glycan. G433 carries GPI-anchor amidated glycine lipidation. Residues 434-456 (AAAVNVVPTTAFGLFAIILASIF) constitute a propeptide, removed in mature form.

In terms of processing, the GPI-anchor is attached to the protein in the endoplasmic reticulum and serves to target the protein to the cell surface. There, the glucosamine-inositol phospholipid moiety is cleaved off and the GPI-modified mannoprotein is covalently attached via its lipidless GPI glycan remnant to the 1,6-beta-glucan of the outer cell wall layer.

The protein resides in the secreted. It is found in the cell wall. The protein localises to the membrane. Cell wall protein which contributes to cell wall synthesis and is important for acquiring normal surface properties. Required for virulence in a mouse infection model. This chain is GPI-anchored protein 13 (PGA13), found in Candida albicans (strain SC5314 / ATCC MYA-2876) (Yeast).